The primary structure comprises 219 residues: Small ribosomal subunit protein uS4 (219 aa).

An S4 RNA-binding domain is found at 112-174 (RRLQTQVLRL…GSSPLMSESH (63 aa)). Positions 193 to 219 (KAAAEAKQARERPPERGGGRKKRGGRR) are disordered. The segment covering 199-210 (KQARERPPERGG) has biased composition (basic and acidic residues).

The protein belongs to the universal ribosomal protein uS4 family. As to quaternary structure, part of the 30S ribosomal subunit. Contacts protein S5. The interaction surface between S4 and S5 is involved in control of translational fidelity.

Functionally, one of the primary rRNA binding proteins, it binds directly to 16S rRNA where it nucleates assembly of the body of the 30S subunit. With S5 and S12 plays an important role in translational accuracy. The chain is Small ribosomal subunit protein uS4 from Methanosarcina mazei (strain ATCC BAA-159 / DSM 3647 / Goe1 / Go1 / JCM 11833 / OCM 88) (Methanosarcina frisia).